We begin with the raw amino-acid sequence, 248 residues long: Proteasome subunit alpha (248 aa).

Ser-2 is subject to N-acetylserine; partial.

The protein belongs to the peptidase T1A family. In terms of assembly, the 20S proteasome core is composed of 14 alpha and 14 beta subunits that assemble into four stacked heptameric rings, resulting in a barrel-shaped structure. The two inner rings, each composed of seven catalytic beta subunits, are sandwiched by two outer rings, each composed of seven alpha subunits. The catalytic chamber with the active sites is on the inside of the barrel. Has a gated structure, the ends of the cylinder being occluded by the N-termini of the alpha-subunits. Is capped by the proteasome-associated ATPase, ARC.

The protein resides in the cytoplasm. It functions in the pathway protein degradation; proteasomal Pup-dependent pathway. Its activity is regulated as follows. The formation of the proteasomal ATPase ARC-20S proteasome complex, likely via the docking of the C-termini of ARC into the intersubunit pockets in the alpha-rings, may trigger opening of the gate for substrate entry. Interconversion between the open-gate and close-gate conformations leads to a dynamic regulation of the 20S proteasome proteolysis activity. In terms of biological role, component of the proteasome core, a large protease complex with broad specificity involved in protein degradation. This is Proteasome subunit alpha from Mycobacterium tuberculosis (strain CDC 1551 / Oshkosh).